Consider the following 32-residue polypeptide: GILSTFKGLAKGVAKDLAGNLLDKFKCKITGC.

C27 and C32 are disulfide-bonded.

As to expression, expressed by the skin glands.

It is found in the secreted. Its function is as follows. Antibacterial activity against Gram-positive bacterium S.aureus and Gram-negative bacterium E.coli. Weak hemolytic activity. The chain is Ranatuerin-2BYa from Rana boylii (Foothill yellow-legged frog).